A 42-amino-acid polypeptide reads, in one-letter code: Envelope protein P10 (42 aa).

Residues 20–40 traverse the membrane as a helical segment; that stretch reads TTAAKIAVVYALVGLVGGLLL.

It localises to the virion membrane. Its function is as follows. Involved in cell lysis. This chain is Envelope protein P10 (P10), found in Pseudomonas savastanoi pv. phaseolicola (Pseudomonas syringae pv. phaseolicola).